An 89-amino-acid polypeptide reads, in one-letter code: Small ribosomal subunit protein uS17 (89 aa).

The protein belongs to the universal ribosomal protein uS17 family. As to quaternary structure, part of the 30S ribosomal subunit.

Its function is as follows. One of the primary rRNA binding proteins, it binds specifically to the 5'-end of 16S ribosomal RNA. The chain is Small ribosomal subunit protein uS17 from Xylella fastidiosa (strain 9a5c).